An 80-amino-acid chain; its full sequence is Large ribosomal subunit protein bL31B (80 aa).

It belongs to the bacterial ribosomal protein bL31 family. Type B subfamily. In terms of assembly, part of the 50S ribosomal subunit.

The polypeptide is Large ribosomal subunit protein bL31B (Streptococcus thermophilus (strain CNRZ 1066)).